The following is a 227-amino-acid chain: MASKGAYKRLMKEYLALQKNPVELVDAKPATENILEWHYIITGPPDTPYEGGQYHGTLIFPPDYPFKPPAIRMITPSGRFQTNTRLCLSFSDFHPKSWNPSWMVSTILVGLVSFMTSDEITTGGIVTSESTRRTYAKDTKRFNIMDNPKFLIMFPELIDKNREDIAKAAAEAALIEPQQIHSTPVSSNECKKNEPFNSKQSWVKSRWSIAVLVFFALALARFFGADS.

Residues 1–206 are Cytoplasmic-facing; the sequence is MASKGAYKRL…NSKQSWVKSR (206 aa). The region spanning 5–163 is the UBC core domain; the sequence is GAYKRLMKEY…FPELIDKNRE (159 aa). Cys87 functions as the Glycyl thioester intermediate in the catalytic mechanism. Residues 207–225 traverse the membrane as a helical segment; sequence WSIAVLVFFALALARFFGA.

Belongs to the ubiquitin-conjugating enzyme family.

The protein localises to the endoplasmic reticulum membrane. It catalyses the reaction S-ubiquitinyl-[E1 ubiquitin-activating enzyme]-L-cysteine + [E2 ubiquitin-conjugating enzyme]-L-cysteine = [E1 ubiquitin-activating enzyme]-L-cysteine + S-ubiquitinyl-[E2 ubiquitin-conjugating enzyme]-L-cysteine.. It functions in the pathway protein modification; protein ubiquitination. Its function is as follows. Catalyzes the covalent attachment of ubiquitin to other proteins. Functions in degradation of misfolded or regulated proteins localized in the endoplasmic reticulum (ER) lumen or membrane via the ubiquitin-proteasome system. Cognate E2 conjugating enzyme for the doa10 ubiquitin ligase complex, which is part of the ERAD-C pathway responsible for the rapid degradation of membrane proteins with misfolded cytoplasmic domains. The protein is Ubiquitin-conjugating enzyme E2 6 (ubc6) of Schizosaccharomyces pombe (strain 972 / ATCC 24843) (Fission yeast).